The chain runs to 740 residues: MTISNTRDITPELIEAHGLKPDEYQRILELIGREPTFTELGIFSAMWNEHCSYKSSKKWLRTLPTSGPRVIQGPGENAGVVDIGDGDCVVFKMESHNHPSYIEPYQGAATGVGGILRDVFTMGARPVAAMNALRFGEPDHPKTRHLVSGVVSGVGGYGNAFGVPTVGGEVNFDKRYNGNILVNAFAAGLARHDGIFLSEAKGVGLPVVYLGAKTGRDGVGGATMASAEFDESIEEKRPTVQVGDPFTEKCLLEACLELMASGAVIAIQDMGAAGLTCSAVEMGAKGDLGIELILDHVPVREENMTAYEMMLSESQERMLMVLKPEKEAEAQAIFRKWGLDFAIVGKTTDDLRFRVIHQGEEVANLPIKDLGDEAPEYDRPWMEPGKHAPLPASNVPQVEDYSAALLKLIGSPDLSSRRWVYEQYDTLIQGNSLQVPGGDAGVIRVEGHETKALAFSSDVTPRYCEADPFEGGKQAVAECWRNITATGAEPLASTDNLNFGNPEKPEIMGQLVKAIEGIGEACRALDFPIVSGNVSLYNETNGQAILPTPTIAGVGLLPDWSQMAKIGGMQDGDTLVLLGGDGTHLGQSVYLRDLFDRADGPAPFVDLALEKRNGEFVRSAIRNGQVTACHDLSDGGLAIAVAEMAIKSGKGATLDAGDGLPHALLFGEDQARYVISATPEMAKLIALNAEGAGVPFRILGTVGGDRLKISKNVDVSVADLTQAYEGWFPNFMNGELTGNN.

The active site involves histidine 50. ATP-binding residues include tyrosine 53 and lysine 92. Glutamate 94 provides a ligand contact to Mg(2+). Residues 95 to 98 and arginine 117 contribute to the substrate site; that span reads SHNH. Histidine 96 (proton acceptor) is an active-site residue. Aspartate 118 contacts Mg(2+). Glutamine 241 contributes to the substrate binding site. Aspartate 269 provides a ligand contact to Mg(2+). Substrate is bound at residue 313-315; the sequence is ESQ. Aspartate 495 and glycine 532 together coordinate ATP. Asparagine 533 provides a ligand contact to Mg(2+). Serine 535 lines the substrate pocket.

Belongs to the FGAMS family. In terms of assembly, monomer. Part of the FGAM synthase complex composed of 1 PurL, 1 PurQ and 2 PurS subunits.

The protein resides in the cytoplasm. It catalyses the reaction N(2)-formyl-N(1)-(5-phospho-beta-D-ribosyl)glycinamide + L-glutamine + ATP + H2O = 2-formamido-N(1)-(5-O-phospho-beta-D-ribosyl)acetamidine + L-glutamate + ADP + phosphate + H(+). It functions in the pathway purine metabolism; IMP biosynthesis via de novo pathway; 5-amino-1-(5-phospho-D-ribosyl)imidazole from N(2)-formyl-N(1)-(5-phospho-D-ribosyl)glycinamide: step 1/2. Its function is as follows. Part of the phosphoribosylformylglycinamidine synthase complex involved in the purines biosynthetic pathway. Catalyzes the ATP-dependent conversion of formylglycinamide ribonucleotide (FGAR) and glutamine to yield formylglycinamidine ribonucleotide (FGAM) and glutamate. The FGAM synthase complex is composed of three subunits. PurQ produces an ammonia molecule by converting glutamine to glutamate. PurL transfers the ammonia molecule to FGAR to form FGAM in an ATP-dependent manner. PurS interacts with PurQ and PurL and is thought to assist in the transfer of the ammonia molecule from PurQ to PurL. The protein is Phosphoribosylformylglycinamidine synthase subunit PurL of Brucella canis (strain ATCC 23365 / NCTC 10854 / RM-666).